Reading from the N-terminus, the 140-residue chain is Nucleoside diphosphate kinase (140 aa).

ATP contacts are provided by Lys11, Phe59, Arg87, Thr93, Arg104, and Asn114. His117 functions as the Pros-phosphohistidine intermediate in the catalytic mechanism.

Belongs to the NDK family. In terms of assembly, homotetramer. It depends on Mg(2+) as a cofactor.

The protein localises to the cytoplasm. The catalysed reaction is a 2'-deoxyribonucleoside 5'-diphosphate + ATP = a 2'-deoxyribonucleoside 5'-triphosphate + ADP. It carries out the reaction a ribonucleoside 5'-diphosphate + ATP = a ribonucleoside 5'-triphosphate + ADP. Its function is as follows. Major role in the synthesis of nucleoside triphosphates other than ATP. The ATP gamma phosphate is transferred to the NDP beta phosphate via a ping-pong mechanism, using a phosphorylated active-site intermediate. This chain is Nucleoside diphosphate kinase, found in Rhizorhabdus wittichii (strain DSM 6014 / CCUG 31198 / JCM 15750 / NBRC 105917 / EY 4224 / RW1) (Sphingomonas wittichii).